The sequence spans 90 residues: UPF0237 protein MMP0657 (90 aa).

Residues 5 to 79 enclose the ACT domain; that stretch reads VITVVGVDKP…SEIGVKINVQ (75 aa).

This sequence belongs to the UPF0237 family.

The polypeptide is UPF0237 protein MMP0657 (Methanococcus maripaludis (strain DSM 14266 / JCM 13030 / NBRC 101832 / S2 / LL)).